We begin with the raw amino-acid sequence, 235 residues long: Orotidine 5'-phosphate decarboxylase (235 aa).

Substrate-binding positions include D10, K33, 60–69, T123, R185, Q194, G214, and R215; that span reads DLKMNDIPNT. The active-site Proton donor is the K62.

The protein belongs to the OMP decarboxylase family. Type 1 subfamily. As to quaternary structure, homodimer.

It carries out the reaction orotidine 5'-phosphate + H(+) = UMP + CO2. Its pathway is pyrimidine metabolism; UMP biosynthesis via de novo pathway; UMP from orotate: step 2/2. In terms of biological role, catalyzes the decarboxylation of orotidine 5'-monophosphate (OMP) to uridine 5'-monophosphate (UMP). The chain is Orotidine 5'-phosphate decarboxylase from Lactobacillus johnsonii (strain CNCM I-12250 / La1 / NCC 533).